The chain runs to 279 residues: Proteasome subunit beta (279 aa).

Positions 1–53 (MSGTAEFPGRIPAPYLEVGSSSFVELLGSVAPELLPGRRPLPPGDMGDAAPHG) are cleaved as a propeptide — removed in mature form; by autocatalysis. Threonine 54 (nucleophile) is an active-site residue.

It belongs to the peptidase T1B family. As to quaternary structure, the 20S proteasome core is composed of 14 alpha and 14 beta subunits that assemble into four stacked heptameric rings, resulting in a barrel-shaped structure. The two inner rings, each composed of seven catalytic beta subunits, are sandwiched by two outer rings, each composed of seven alpha subunits. The catalytic chamber with the active sites is on the inside of the barrel. Has a gated structure, the ends of the cylinder being occluded by the N-termini of the alpha-subunits. Is capped by the proteasome-associated ATPase, ARC.

It localises to the cytoplasm. It catalyses the reaction Cleavage of peptide bonds with very broad specificity.. It participates in protein degradation; proteasomal Pup-dependent pathway. The formation of the proteasomal ATPase ARC-20S proteasome complex, likely via the docking of the C-termini of ARC into the intersubunit pockets in the alpha-rings, may trigger opening of the gate for substrate entry. Interconversion between the open-gate and close-gate conformations leads to a dynamic regulation of the 20S proteasome proteolysis activity. Functionally, component of the proteasome core, a large protease complex with broad specificity involved in protein degradation. The chain is Proteasome subunit beta from Stackebrandtia nassauensis (strain DSM 44728 / CIP 108903 / NRRL B-16338 / NBRC 102104 / LLR-40K-21).